Consider the following 78-residue polypeptide: uncharacterized protein (78 aa).

This is an uncharacterized protein from Escherichia coli (Bacteriophage T4).